The chain runs to 334 residues: Tryptophan--tRNA ligase (334 aa).

Residues 11–13 (QPS) and 19–20 (GN) contribute to the ATP site. A 'HIGH' region motif is present at residues 12-20 (PSGELTIGN). Position 135 (aspartate 135) interacts with L-tryptophan. ATP is bound by residues 147 to 149 (GED), valine 186, and 195 to 199 (KMSKS). The 'KMSKS' region motif lies at 195–199 (KMSKS).

It belongs to the class-I aminoacyl-tRNA synthetase family. As to quaternary structure, homodimer.

Its subcellular location is the cytoplasm. The catalysed reaction is tRNA(Trp) + L-tryptophan + ATP = L-tryptophyl-tRNA(Trp) + AMP + diphosphate + H(+). In terms of biological role, catalyzes the attachment of tryptophan to tRNA(Trp). The sequence is that of Tryptophan--tRNA ligase from Salmonella typhi.